Reading from the N-terminus, the 477-residue chain is MNLLDPFMKMTEEQDKCMSGAPSPTMSDDSAGSPCPSGSGSDTENTRPQENTFPKGDQELKKETEDEKFPVCIREAVSQVLKGYDWTLVPMPVRVNGSSKNKPHVKRPMNAFMVWAQAARRKLADQYPHLHNAELSKTLGKLWRLLNEGEKRPFVEEAERLRVQHKKDHPDYKYQPRRRKSVKNGQTEQEDGAEQTHISPNAIFKALQADSPHSSSSMSEVHSPGEHSGQSQGPPTPPTTPKTDIQPGKPDLKREGRPLQENGRQPPHIDFRDVDIGELSSEVISTIETFDVNEFDQYLPPNGHPGVGSTQASYTGSYGISSTPSATTGAGPAWMSKQQQQQPQQHSLSTLNSEQSQSQQRTHIKTEQLSPSHYSDQQQQHSPQQLNYSSFNLQHYSSSYPTITRAQYDYTEHQGSSTYYSHASGQNSGLYSTFSYMNPSQRPLYTPIADTTGVPSIPQTHSPQHWEQPVYTQLTRP.

Disordered stretches follow at residues 1–66 (MNLL…ETED) and 157–274 (EAER…FRDV). Residues 27–42 (SDDSAGSPCPSGSGSD) show a composition bias toward low complexity. Basic and acidic residues-rich tracts occupy residues 56–66 (GDQELKKETED) and 157–174 (EAERLRVQHKKDHPDYKY). A Glycyl lysine isopeptide (Lys-Gly) (interchain with G-Cter in SUMO) cross-link involves residue lysine 61. The interval 63–103 (ETEDEKFPVCIREAVSQVLKGYDWTLVPMPVRVNGSSKNKP) is dimerization (DIM). Residues 63-103 (ETEDEKFPVCIREAVSQVLKGYDWTLVPMPVRVNGSSKNKP) are PQA. The HMG box DNA-binding region spans 105–173 (VKRPMNAFMV…QHKKDHPDYK (69 aa)). Positions 211 to 222 (SPHSSSSMSEVH) are enriched in low complexity. Residues 224 to 308 (PGEHSGQSQG…LPPNGHPGVG (85 aa)) are transactivation domain (TAM). 2 short sequence motifs (9aaTAD) span residues 276 to 285 (IGELSSEVIS) and 291 to 299 (DVNEFDQYL). The interval 301-384 (PNGHPGVGST…SDQQQQHSPQ (84 aa)) is disordered. Polar residues-rich tracts occupy residues 308–328 (GSTQASYTGSYGISSTPSATT) and 346–361 (HSLSTLNSEQSQSQQR). Residues 361 to 477 (RTHIKTEQLS…QPVYTQLTRP (117 aa)) form a transactivation domain (TAC) region. Lysine 365 is covalently cross-linked (Glycyl lysine isopeptide (Lys-Gly) (interchain with G-Cter in SUMO)). Positions 370-384 (SPSHYSDQQQQHSPQ) are enriched in low complexity. Residues 428 to 436 (SGLYSTFSY) carry the 9aaTAD 3 motif. Positions 446–477 (TPIADTTGVPSIPQTHSPQHWEQPVYTQLTRP) are disordered. Over residues 453–477 (GVPSIPQTHSPQHWEQPVYTQLTRP) the composition is skewed to polar residues.

As to quaternary structure, interacts with the sumoylation factors ube2i/ubc9 and sumo1. Post-translationally, sumoylated. Lys-365 is the major site of sumoylation, although sumoylation at Lys-61 also occurs. Sumoylation plays a key role in regulating formation of the neural crest and otic placode. As to expression, from mid-gastrula (stage 10.5-11), expressed in a ring around the blastopore, with expression decreasing toward the dorsal side. At stage 12, expression around the blastopore decreases and begins to increase lateral to the neural plate in the presumptive neural crest, where expression dramatically increases around stage 14. Also expressed in the otic placode as early as stage 13/14. By the tailbud stage expression is restricted to the otic cup and then throughout the otic vesicle, with more intense staining at the dorsal-most region, the prospective region of the semicircular canals and endolymphatic duct. At the early tailbud stage (stage 23), expressed in migrating cranial neural crest cells and in the trunk neural crest. Also expressed in the genital ridges, developing eye, nasal placode and prospective pineal gland. Around stage 25, expression is down-regulated in the trunk neural crest but persists in the migrating cranial crest cells as they populate the pharyngeal arches, otic placode, developing eye, genital ridges and notochord. By stage 31, expression remains strong in the pharyngeal arches. Also expressed in the pancreas; first expressed at stage 25 in the pancreatic anlagen, dorsally in diverticulum. As development proceeds, expression continues in pancreatic tissue, being restricted to ventral and dorsal pancreatic buds.

It is found in the nucleus. The protein localises to the cytoplasm. Functionally, transcription factor that plays a key role in chondrocytes differentiation and skeletal development. Specifically binds the 5'-ACAAAG-3' DNA motif present in enhancers and super-enhancers and promotes expression of genes important for chondrogenesis, including COL2A1. Plays a central role in successive steps of chondrocyte differentiation. Absolutely required for precartilaginous condensation, the first step in chondrogenesis during which skeletal progenitors differentiate into prechondrocytes. Together with SOX5 and SOX6, required for overt chondrogenesis when condensed prechondrocytes differentiate into early stage chondrocytes, the second step in chondrogenesis. Later, required to direct hypertrophic maturation and block osteoblast differentiation of growth plate chondrocytes: maintains chondrocyte columnar proliferation, delays prehypertrophy and then prevents osteoblastic differentiation of chondrocytes. Also required for chondrocyte hypertrophy, both indirectly, by keeping the lineage fate of chondrocytes, and directly, by remaining present in upper hypertrophic cells. Low lipid levels are the main nutritional determinant for chondrogenic commitment of skeletal progenitor cells: when lipids levels are low, FOXO transcription factors promote expression of SOX9, which induces chondrogenic commitment and suppresses fatty acid oxidation. In addition to cartilage development, also acts as a regulator of proliferation and differentiation in epithelial stem/progenitor cells. Involved in development of the cranial neural crest, which is fated to form skeletal elements. Also required for otic placode specification during inner ear development. This is Transcription factor Sox-9-A (sox9-a) from Xenopus laevis (African clawed frog).